We begin with the raw amino-acid sequence, 245 residues long: 1-(5-phosphoribosyl)-5-[(5-phosphoribosylamino)methylideneamino] imidazole-4-carboxamide isomerase (245 aa).

Aspartate 7 functions as the Proton acceptor in the catalytic mechanism. The active-site Proton donor is aspartate 129.

This sequence belongs to the HisA/HisF family.

It is found in the cytoplasm. It carries out the reaction 1-(5-phospho-beta-D-ribosyl)-5-[(5-phospho-beta-D-ribosylamino)methylideneamino]imidazole-4-carboxamide = 5-[(5-phospho-1-deoxy-D-ribulos-1-ylimino)methylamino]-1-(5-phospho-beta-D-ribosyl)imidazole-4-carboxamide. The protein operates within amino-acid biosynthesis; L-histidine biosynthesis; L-histidine from 5-phospho-alpha-D-ribose 1-diphosphate: step 4/9. This Shewanella halifaxensis (strain HAW-EB4) protein is 1-(5-phosphoribosyl)-5-[(5-phosphoribosylamino)methylideneamino] imidazole-4-carboxamide isomerase.